Here is a 342-residue protein sequence, read N- to C-terminus: Protein rough sheath 2 homolog (342 aa).

HTH myb-type domains are found at residues 1-58 (MQPP…KNYL) and 59-113 (RPGI…EKQQ). 2 DNA-binding regions (H-T-H motif) span residues 32–58 (WSLVSQRMNRPLHRDAKSCLERWKNYL) and 86–109 (WKKIAAEVPGRTAKRLGKWWEVFK). Residues 253–304 (RRREATEEFEAKMRALREEQAAAVERVEAEYREKMAGLRRDAEAKEQKMAEQ) adopt a coiled-coil conformation.

Its subcellular location is the nucleus. Its function is as follows. Transcription factor required for normal cell differentiation. May interact with other proteins to repress the knox homeobox genes. This chain is Protein rough sheath 2 homolog (RS2), found in Oryza sativa subsp. japonica (Rice).